The sequence spans 192 residues: Putative acetyltransferase SH0499 (192 aa).

The protein belongs to the transferase hexapeptide repeat family.

In Staphylococcus haemolyticus (strain JCSC1435), this protein is Putative acetyltransferase SH0499.